We begin with the raw amino-acid sequence, 435 residues long: 3-phosphoshikimate 1-carboxyvinyltransferase (435 aa).

The 3-phosphoshikimate site is built by K15, S16, and R20. K15 lines the phosphoenolpyruvate pocket. Residues G96 and R124 each contribute to the phosphoenolpyruvate site. Residues S169, Q171, T195, D319, and K346 each coordinate 3-phosphoshikimate. Residue Q171 participates in phosphoenolpyruvate binding. D319 (proton acceptor) is an active-site residue. Phosphoenolpyruvate is bound by residues R350 and R394.

Belongs to the EPSP synthase family. In terms of assembly, monomer.

It localises to the cytoplasm. It catalyses the reaction 3-phosphoshikimate + phosphoenolpyruvate = 5-O-(1-carboxyvinyl)-3-phosphoshikimate + phosphate. Its pathway is metabolic intermediate biosynthesis; chorismate biosynthesis; chorismate from D-erythrose 4-phosphate and phosphoenolpyruvate: step 6/7. In terms of biological role, catalyzes the transfer of the enolpyruvyl moiety of phosphoenolpyruvate (PEP) to the 5-hydroxyl of shikimate-3-phosphate (S3P) to produce enolpyruvyl shikimate-3-phosphate and inorganic phosphate. This Chloroherpeton thalassium (strain ATCC 35110 / GB-78) protein is 3-phosphoshikimate 1-carboxyvinyltransferase.